A 130-amino-acid chain; its full sequence is Small ribosomal subunit protein uS9 (130 aa).

Positions 109-130 (RKKERKKYGQRAARARYQYSKR) are disordered.

Belongs to the universal ribosomal protein uS9 family.

In Nitratidesulfovibrio vulgaris (strain DSM 19637 / Miyazaki F) (Desulfovibrio vulgaris), this protein is Small ribosomal subunit protein uS9.